A 337-amino-acid polypeptide reads, in one-letter code: MQDEGVDMKKLLLRSSDEVRVIAPSCSMRKIDSSVIERAQERFRCLGLNVAFGDHVYDEDFLGSASVDKRVADLHAAFADKKVKLILTAIGGFNSNQLLQHIDYALLKKNPKLLCGFSDVTALLNAIHAKTGMPVFYGPHFSTFGMEKGIEFTIECFKNTFFYGRCDILASETWSDDMWFKDQEHRQFITNPGYEIIHRGDMVGMGVGGNISTFNLLAGTEYEPSLKKSILFIEDTSRMSITDFDRHLEALTQRDDFCTVRGILIGRFQKDSGIDMDMLRKIISRKKALDAIPLFANVDFGHTTPHCILPIGGMIRVNVDRKCITVQLHSSVEQLPE.

Residue S118 is the Nucleophile of the active site. Residues E234 and H302 each act as charge relay system in the active site.

The protein belongs to the peptidase S66 family.

This Treponema pallidum (strain Nichols) protein is Putative carboxypeptidase TP_0688.